Consider the following 314-residue polypeptide: 1-aminocyclopropane-1-carboxylate oxidase 1 (314 aa).

The 101-residue stretch at 153 to 253 folds into the Fe2OG dioxygenase domain; sequence PNFGTKVSNY…RMSIASFYNP (101 aa). Fe cation is bound by residues histidine 177, aspartate 179, and histidine 234.

It belongs to the iron/ascorbate-dependent oxidoreductase family. Monomer. The cofactor is Fe cation.

It carries out the reaction 1-aminocyclopropane-1-carboxylate + L-ascorbate + O2 = ethene + L-dehydroascorbate + hydrogen cyanide + CO2 + 2 H2O. The protein operates within alkene biosynthesis; ethylene biosynthesis via S-adenosyl-L-methionine; ethylene from S-adenosyl-L-methionine: step 2/2. The polypeptide is 1-aminocyclopropane-1-carboxylate oxidase 1 (Malus domestica (Apple)).